The following is a 514-amino-acid chain: Cytochrome P450 monooxygenase nodJ (514 aa).

Residues 2–24 (ELIVIIITLAFCILLYGTRWRAA) traverse the membrane as a helical segment. Asparagine 144, asparagine 245, and asparagine 416 each carry an N-linked (GlcNAc...) asparagine glycan. Cysteine 432 contributes to the heme binding site.

It belongs to the cytochrome P450 family. Heme serves as cofactor.

It localises to the membrane. The protein operates within secondary metabolite biosynthesis. Cytochrome P450 monooxygenase; part of the gene cluster that mediates the biosynthesis of the indole diterpenes nodulisporic acids (NA). Nodulisporic acid A (NAA) and its chemically modified derivatives are of particular significance because of their highly potent insecticidal activity against blood-feeding arthropods and lack of observable adverse effects on mammals, in particular the tremogenicity associated with the paspaline-derived IDTs is not observed. The geranylgeranyl diphosphate (GGPP) synthase ggs1, localized outside of the cluster, is proposed to catalyze the first step in nodulisporic acid biosynthesis via conversion of farnesyl pyrophosphate and isopentyl pyrophosphate into geranylgeranyl pyrophosphate (GGPP). Condensation of indole-3-glycerol phosphate with GGPP by the prenyl transferase nodC then forms 3-geranylgeranylindole (3-GGI). Epoxidation by the FAD-dependent monooxygenase nodM leads to a single-epoxidized-GGI that is substrate of the terpene cyclase nodB for cyclization to yield emindole SB. The terminal methyl carbon, C28, of emindole SB is then oxidized by the cytochrome P450 monooxygenase nodW to produce nodulisporic acid F (NAF), the pentacyclic core of NAA. NAF is converted to nodulisporic acid E (NAE) via prenylation. This step is probably performed by one of the indole diterpene prenyltransferases nodD1 or nodD2. Several oxidation steps performed by the FAD-linked oxidoreductase nodO and one of the cytochrome P450 monooxygenase nodR, nodX or nodZ further convert NAE to nodulisporic acid D (NAD). NAD is substrate of cytochrome P450 monooxygenase nodJ to produce the precursor of nodulisporic acid C (NAC), converted to NAC by one of the indole diterpene prenyltransferases nodD1 or nodD2. The FAD-dependent monooxygenase nodY2 then oxidizes NAC to nodulisporic acid B (NAB). Finally NAB is converted to NAA by one of the cytochrome P450 monooxygenases nodR, nodX or nodZ. This chain is Cytochrome P450 monooxygenase nodJ, found in Hypoxylon pulicicidum.